Reading from the N-terminus, the 1122-residue chain is Receptor-type guanylate cyclase gcy-5 (1122 aa).

The signal sequence occupies residues 1–19 (MRLLYFSMVLLWVLGASEC). The Extracellular segment spans residues 20–486 (QVIPSSRRTL…CPVQFWDQYG (467 aa)). N-linked (GlcNAc...) asparagine glycosylation is found at N252, N299, N344, N350, N378, N434, and N439. A helical membrane pass occupies residues 487–507 (VLIFVASIVLIFLICIMLMCF). The Cytoplasmic portion of the chain corresponds to 508–1122 (GFMIRGRRAE…KSKMDTLKVV (615 aa)). The segment at 536 to 562 (QKEKRKPNSRRSLQSGPSTITGESKMT) is disordered. Residues 542 to 830 (PNSRRSLQSG…NTNLMDHVFN (289 aa)) enclose the Protein kinase domain. Over residues 545–559 (RRSLQSGPSTITGES) the composition is skewed to polar residues. In terms of domain architecture, Guanylate cyclase spans 888–1018 (TVLFSDVVKF…DTVNTASRME (131 aa)). A disordered region spans residues 1071–1122 (SDTKSLSTRTTPPITDENWPPQMKEDLKKRAVTPYPERQRSGKSKMDTLKVV). The segment covering 1074–1083 (KSLSTRTTPP) has biased composition (polar residues). The span at 1107 to 1122 (ERQRSGKSKMDTLKVV) shows a compositional bias: basic and acidic residues.

This sequence belongs to the adenylyl cyclase class-4/guanylyl cyclase family. In terms of tissue distribution, expressed in both ASEL and ASER neurons during early embryonic stages and becomes specifically expressed in ASER neuron in early larval stage.

It is found in the cell membrane. It catalyses the reaction GTP = 3',5'-cyclic GMP + diphosphate. Its function is as follows. Guanylate cyclase involved in the production of the second messenger cGMP. Unlike other guanylate cyclases expressed in ASE neurons, may not play a role in chemotaxis responses to salt ions mediated by ASE sensory neurons. This Caenorhabditis elegans protein is Receptor-type guanylate cyclase gcy-5.